Consider the following 165-residue polypeptide: Protein SprT (165 aa).

The region spanning 22-163 (LAQANLKLDR…RCVHCGEPLV (142 aa)) is the SprT-like domain. Residue histidine 78 coordinates Zn(2+). The active site involves glutamate 79. Histidine 82 contacts Zn(2+).

This sequence belongs to the SprT family. Zn(2+) serves as cofactor.

It is found in the cytoplasm. This Salmonella agona (strain SL483) protein is Protein SprT.